The sequence spans 344 residues: Cytochrome c biogenesis protein CcsA (344 aa).

8 consecutive transmembrane segments (helical) span residues 21 to 41, 45 to 65, 80 to 100, 106 to 126, 151 to 171, 252 to 272, 287 to 307, and 313 to 333; these read NVAFAVCLGAMLFYWGGAAFP, LLSELGLAGMIGANLTIAALL, LYESLFFLAWGITALHLLALH, WVGVTTAPLATGVVAFAALAL, VMLLAYAALLVGSLLAIAFLI, LIGLGFPLLTIGIIAGAVWAN, WALITWLVFAAYLHARITKGW, and ALLASLGFGVVWVCYLGVNFL.

It belongs to the CcmF/CycK/Ccl1/NrfE/CcsA family. May interact with ccs1.

It localises to the cellular thylakoid membrane. Its function is as follows. Required during biogenesis of c-type cytochromes (cytochrome c6 and cytochrome f) at the step of heme attachment. This is Cytochrome c biogenesis protein CcsA from Synechococcus sp. (strain JA-3-3Ab) (Cyanobacteria bacterium Yellowstone A-Prime).